A 1044-amino-acid polypeptide reads, in one-letter code: Protein ITPRID1 (1044 aa).

The span at 1 to 14 (MMAQKSQGSDNLQE) shows a compositional bias: polar residues. Disordered regions lie at residues 1–20 (MMAQ…EKSK), 230–251 (EEKA…EHRR), 388–489 (MEEV…SSQE), and 583–607 (PEGA…HTQD). Positions 388-398 (MEEVQSFEEET) are enriched in acidic residues. Polar residues-rich tracts occupy residues 460–469 (HSLVSSQDCQ) and 480–489 (RASMSFSSQE). Residues 896–937 (SRDMSEEEREEAEQLQTLREALRQQVAELEFQLGDRAQQIRE) are a coiled coil.

This chain is Protein ITPRID1, found in Homo sapiens (Human).